The primary structure comprises 329 residues: Malate dehydrogenase (329 aa).

Position 12-18 (12-18) interacts with NAD(+); sequence GAAGQIG. Substrate is bound by residues Arg95 and Arg101. NAD(+) is bound by residues Asn108, Gln115, and 132–134; that span reads VGN. Substrate is bound by residues Asn134 and Arg165. Residue His190 is the Proton acceptor of the active site.

This sequence belongs to the LDH/MDH superfamily. MDH type 2 family.

It catalyses the reaction (S)-malate + NAD(+) = oxaloacetate + NADH + H(+). In terms of biological role, catalyzes the reversible oxidation of malate to oxaloacetate. This Polynucleobacter necessarius subsp. necessarius (strain STIR1) protein is Malate dehydrogenase.